We begin with the raw amino-acid sequence, 467 residues long: Translation initiation factor eIF2B subunit delta (467 aa).

The interval 1–106 (MGFSAEQAKK…QNPQNSPETD (106 aa)) is disordered. Phosphoserine occurs at positions 16, 19, 21, and 23. Residues 16–37 (SPVSESSSVGGTSPATASSVVS) are compositionally biased toward polar residues. Phosphothreonine is present on threonine 27. Phosphoserine occurs at positions 28 and 37. The span at 51–61 (LKKARKQASRR) shows a compositional bias: basic residues. The segment covering 84–102 (PNKNSNQQKKASKQNPQNS) has biased composition (low complexity).

It belongs to the eIF-2B alpha/beta/delta subunits family. In terms of assembly, component of the translation initiation factor 2B (eIF2B) complex which is a heterodecamer of two sets of five different subunits: alpha, beta, gamma, delta and epsilon. Subunits alpha, beta and delta comprise a regulatory subcomplex and subunits epsilon and gamma comprise a catalytic subcomplex. Within the complex, the hexameric regulatory complex resides at the center, with the two heterodimeric catalytic subcomplexes bound on opposite sides.

The protein localises to the cytoplasm. The protein resides in the cytosol. In terms of biological role, acts as a component of the translation initiation factor 2B (eIF2B) complex, which catalyzes the exchange of GDP for GTP on the eukaryotic initiation factor 2 (eIF2) complex gamma subunit. Its guanine nucleotide exchange factor activity is repressed when bound to eIF2 complex phosphorylated on the alpha subunit, thereby limiting the amount of methionyl-initiator methionine tRNA available to the ribosome and consequently global translation is repressed. The sequence is that of Translation initiation factor eIF2B subunit delta (tif224) from Schizosaccharomyces pombe (strain 972 / ATCC 24843) (Fission yeast).